Reading from the N-terminus, the 1755-residue chain is E3 ubiquitin-protein ligase UBR2 (1755 aa).

A2 is subject to N-acetylalanine. A Glycyl lysine isopeptide (Lys-Gly) (interchain with G-Cter in ubiquitin) cross-link involves residue K94. The UBR-type zinc finger occupies 97 to 168 (HLCGRVFKVG…EGPYCQKHEL (72 aa)). Zn(2+)-binding residues include C99, C112, C115, C124, C127, H133, and H136. A peptide is bound at residue F148. C149 contributes to the Zn(2+) binding site. D150 is a binding site for a peptide. Residue C151 coordinates Zn(2+). Residue D153 coordinates a peptide. A Glycyl lysine isopeptide (Lys-Gly) (interchain with G-Cter in ubiquitin) cross-link involves residue K158. A Zn(2+)-binding site is contributed by C163. Residue K165 forms a Glycyl lysine isopeptide (Lys-Gly) (interchain with G-Cter in ubiquitin) linkage. H166 contributes to the Zn(2+) binding site. Residues K248, K255, and K470 each participate in a glycyl lysine isopeptide (Lys-Gly) (interchain with G-Cter in ubiquitin) cross-link. Position 476 is a phosphoserine (S476). Residues K488, K568, K779, and K789 each participate in a glycyl lysine isopeptide (Lys-Gly) (interchain with G-Cter in ubiquitin) cross-link. The interval 1004-1034 (ESSPTSPVAETEGTIMEESSRDKDKAERKRK) is disordered. A coiled-coil region spans residues 1019 to 1054 (MEESSRDKDKAERKRKAEIARLRREKIMAQMSEMQR). Residues 1021 to 1034 (ESSRDKDKAERKRK) are compositionally biased toward basic and acidic residues. The Zn(2+) site is built by C1108, C1111, C1168, H1170, H1173, C1176, C1210, and C1213. The segment at 1108–1214 (CILCQEEQEV…NGEFLCPLCE (107 aa)) adopts an RING-type; atypical zinc-finger fold. The segment at 1261 to 1287 (RKEESTPNNASTKNSENVDELQLPEGF) is disordered. Over residues 1266 to 1275 (TPNNASTKNS) the composition is skewed to polar residues. Glycyl lysine isopeptide (Lys-Gly) (interchain with G-Cter in ubiquitin) cross-links involve residues K1496, K1599, and K1689. Position 1694 is a phosphoserine (S1694). Residue Y1697 is modified to Phosphotyrosine.

This sequence belongs to the E3 ubiquitin-protein ligase UBR1-like family. As to quaternary structure, interacts with UBE2B; promotes the UBE2B-H2A interaction and the ubiquitination of histone H2A by UBE2B and UBR2. Interacts with RECQL4. Interacts with TEX19; does not lead to TEX19 degradation and stabilizes it. Interacts with CASP8. Interacts with ATXN3. Interacts with UBE2O. In terms of processing, dephosphorylated by DUSP22 at Ser-1694 and Tyr-1697, leading to subsequent ubiquitination and proteasomal degradation. Post-translationally, 'Lys-48'-linked ubiquitinated at Lys-94, Lys-779 and Lys-1599 following DUSP22-mediated dephosphorylation of Ser-1694 and Tyr-1697 which promotes UBR2 interaction with the SCF(FBW1A) E3 ubiquitin-protein ligase complex. In terms of tissue distribution, broadly expressed, with highest levels in skeletal muscle, kidney and pancreas. Present in acinar cells of the pancreas (at protein level).

It is found in the nucleus. The protein resides in the chromosome. The catalysed reaction is S-ubiquitinyl-[E2 ubiquitin-conjugating enzyme]-L-cysteine + [acceptor protein]-L-lysine = [E2 ubiquitin-conjugating enzyme]-L-cysteine + N(6)-ubiquitinyl-[acceptor protein]-L-lysine.. It functions in the pathway protein modification; protein ubiquitination. Its function is as follows. E3 ubiquitin-protein ligase which is a component of the N-end rule pathway. Recognizes and binds to proteins bearing specific N-terminal residues (N-degrons) that are destabilizing according to the N-end rule, leading to their ubiquitination and subsequent degradation. Recognizes both type-1 and type-2 N-degrons, containing positively charged amino acids (Arg, Lys and His) and bulky and hydrophobic amino acids, respectively. Does not ubiquitinate proteins that are acetylated at the N-terminus. In contrast, it strongly binds methylated N-degrons. Plays a critical role in chromatin inactivation and chromosome-wide transcriptional silencing during meiosis via ubiquitination of histone H2A. Binds leucine and is a negative regulator of the leucine-mTOR signaling pathway, thereby controlling cell growth. Required for spermatogenesis, promotes, with Tex19.1, SPO11-dependent recombination foci to accumulate and drive robust homologous chromosome synapsis. Polyubiquitinates LINE-1 retrotransposon encoded, LIRE1, which induces degradation, inhibiting LINE-1 retrotransposon mobilization. Catalyzes ubiquitination and degradation of the N-terminal part of NLRP1 following NLRP1 activation by pathogens and other damage-associated signals: ubiquitination promotes degradation of the N-terminal part and subsequent release of the cleaved C-terminal part of NLRP1, which polymerizes and forms the NLRP1 inflammasome followed by host cell pyroptosis. Plays a role in T-cell receptor signaling by inducing 'Lys-63'-linked ubiquitination of lymphocyte cell-specific kinase LCK. This activity is regulated by DUSP22, which induces 'Lys-48'-linked ubiquitination of UBR2, leading to its proteasomal degradation by SCF E3 ubiquitin-protein ligase complex. This chain is E3 ubiquitin-protein ligase UBR2 (UBR2), found in Homo sapiens (Human).